The sequence spans 146 residues: Prolactin-inducible protein (146 aa).

Residues 1-28 form the signal peptide; it reads MRLLQLLFRASPATLLLVLCLQLGANKA. Residue Gln-29 is modified to Pyrrolidone carboxylic acid. Intrachain disulfides connect Cys-65/Cys-91 and Cys-89/Cys-123. Asn-105 carries an N-linked (GlcNAc...) asparagine glycan.

Belongs to the PIP family. Monomer. Interacts with AZGP1. As to expression, expressed in pathological conditions of the mammary gland and in several exocrine tissues, such as the lacrimal, salivary, and sweat glands.

It localises to the secreted. This chain is Prolactin-inducible protein (PIP), found in Homo sapiens (Human).